The following is a 163-amino-acid chain: MAEARHAPLKDQTSVSGARVLIVEARFYDDIQDALLEGAVAELQSAGVRHDVVTVPGALEIPAAIVFALDAAERRGEPYDAVVALGCVVRGDTIHFEIVSMESARALMDLSVKRGVALGNGIITVDTDAQAWARARAGELNKGGHAAQAALTMLRMKRRLAKA.

5-amino-6-(D-ribitylamino)uracil is bound by residues F27, A58–E60, and C87–V89. D92 to T93 serves as a coordination point for (2S)-2-hydroxy-3-oxobutyl phosphate. H95 acts as the Proton donor in catalysis. Residue N120 participates in 5-amino-6-(D-ribitylamino)uracil binding. (2S)-2-hydroxy-3-oxobutyl phosphate is bound at residue R134.

The protein belongs to the DMRL synthase family.

It carries out the reaction (2S)-2-hydroxy-3-oxobutyl phosphate + 5-amino-6-(D-ribitylamino)uracil = 6,7-dimethyl-8-(1-D-ribityl)lumazine + phosphate + 2 H2O + H(+). Its pathway is cofactor biosynthesis; riboflavin biosynthesis; riboflavin from 2-hydroxy-3-oxobutyl phosphate and 5-amino-6-(D-ribitylamino)uracil: step 1/2. Catalyzes the formation of 6,7-dimethyl-8-ribityllumazine by condensation of 5-amino-6-(D-ribitylamino)uracil with 3,4-dihydroxy-2-butanone 4-phosphate. This is the penultimate step in the biosynthesis of riboflavin. The polypeptide is 6,7-dimethyl-8-ribityllumazine synthase (Nitrobacter winogradskyi (strain ATCC 25391 / DSM 10237 / CIP 104748 / NCIMB 11846 / Nb-255)).